Reading from the N-terminus, the 159-residue chain is 2-C-methyl-D-erythritol 2,4-cyclodiphosphate synthase (159 aa).

Residues Asp10 and His12 each coordinate a divalent metal cation. Residues Asp10 to His12 and His36 to Ser37 contribute to the 4-CDP-2-C-methyl-D-erythritol 2-phosphate site. Residue His44 participates in a divalent metal cation binding. 4-CDP-2-C-methyl-D-erythritol 2-phosphate-binding positions include Asp58–Gly60, Phe63–Asp67, Ala102–Ala108, Thr134–Glu137, Phe141, and Arg144.

The protein belongs to the IspF family. Homotrimer. A divalent metal cation is required as a cofactor.

It catalyses the reaction 4-CDP-2-C-methyl-D-erythritol 2-phosphate = 2-C-methyl-D-erythritol 2,4-cyclic diphosphate + CMP. It participates in isoprenoid biosynthesis; isopentenyl diphosphate biosynthesis via DXP pathway; isopentenyl diphosphate from 1-deoxy-D-xylulose 5-phosphate: step 4/6. Functionally, involved in the biosynthesis of isopentenyl diphosphate (IPP) and dimethylallyl diphosphate (DMAPP), two major building blocks of isoprenoid compounds. Catalyzes the conversion of 4-diphosphocytidyl-2-C-methyl-D-erythritol 2-phosphate (CDP-ME2P) to 2-C-methyl-D-erythritol 2,4-cyclodiphosphate (ME-CPP) with a corresponding release of cytidine 5-monophosphate (CMP). In Shewanella woodyi (strain ATCC 51908 / MS32), this protein is 2-C-methyl-D-erythritol 2,4-cyclodiphosphate synthase.